We begin with the raw amino-acid sequence, 603 residues long: MKVASVIGLRPRISGLLFLTLGVIALITILVPNSDSSSTTSTTRVPPSNIYSNYGRVKEQAAVDYLDLRFFSLGVNRLKEFPLCGKERDNYVPCYNVTESDRNCEFAREEERCLVRPPRDYKIPLRWPVGRDIIWTGNVKITKDQFLSSGTMTKRLMLLEENQITFHSDDGLIFDGVKDYAFQIAEMIGLGSDTEFPQAGIRTVLDIGCGFGSFGAHLVSLNVMPICIAEYETSGSQVQLALERGLPAMIGNFFSKQLPYPALSFDMVHCAQCGITWDIKDAMLLLEVDRVLKPGGYFVLTSPTSKAQGNSPDTKKTSISTRVDELSKKICWSLSGQQDETFLWQKTADPNCYSSRSQASIPVCKDDDSVPYYHPLVPCISGTKSKRWIPIQNRSRASGTSLSELEIHGIKPEEFDEDIQVWRSALKNYWSLLTPLIFSDHPKRPGDEDPVPPFYMIRNAMDMNARYGNLNQALLNQGKSVWVMNVVPVKARNTLPIILDRGFTGALHDWCEPFPTYPRTYDMLHANELLTHLSSERCSLMDLFLEMDRILRPEGWVVLSDKLGVIEMARTLAARVRWEARVIDIQDGSDQRLLVCQKPLLKK.

The Cytoplasmic portion of the chain corresponds to 1–12 (MKVASVIGLRPR). A helical; Signal-anchor for type II membrane protein transmembrane segment spans residues 13 to 33 (ISGLLFLTLGVIALITILVPN). Residues 34–603 (SDSSSTTSTT…LVCQKPLLKK (570 aa)) lie on the Lumenal side of the membrane. N96 and N393 each carry an N-linked (GlcNAc...) asparagine glycan.

Belongs to the methyltransferase superfamily.

It is found in the endoplasmic reticulum membrane. In Arabidopsis thaliana (Mouse-ear cress), this protein is Probable methyltransferase PMT4.